Consider the following 122-residue polypeptide: Large ribosomal subunit protein uL14c (122 aa).

The protein belongs to the universal ribosomal protein uL14 family. As to quaternary structure, part of the 50S ribosomal subunit.

It is found in the plastid. The protein localises to the chloroplast. Functionally, binds to 23S rRNA. The protein is Large ribosomal subunit protein uL14c of Liriodendron tulipifera (Tuliptree).